A 2240-amino-acid polypeptide reads, in one-letter code: Cadherin-89D (2240 aa).

5 Cadherin domains span residues 70-179, 180-295, 296-411, 412-528, and 529-643; these read SEGV…APEF, LNVP…PPKF, TEGV…VPEF, EADY…TPKF, and EHGN…APYE. N-linked (GlcNAc...) asparagine glycans are attached at residues N114, N119, N191, N278, N334, N417, N585, N720, N752, N822, N833, N983, N989, N1006, N1255, N1318, N1486, N1529, and N1556. The disordered stretch occupies residues 814–844; sequence MPSEPTSRNITMGSRFRSRNRSRSSKSKRRL. Cadherin domains follow at residues 824 to 927, 928 to 1087, 1171 to 1284, 1285 to 1389, and 1411 to 1520; these read TMGS…APKF, NALT…APMF, TTKC…APTF, KKSW…RPEF, and MLPV…PPKS. Over residues 829-844 the composition is skewed to basic residues; sequence FRSRNRSRSSKSKRRL. Cadherin domains follow at residues 1534-1660 and 1661-1774; these read QHAY…APKF and RGNG…MPVE. A helical membrane pass occupies residues 1884–1904; sequence FVTVVLLALISLGALIAACCY. At 1905–2240 the chain is on the cytoplasmic side; the sequence is VCMRQKRRLW…LEFSKSNSLF (336 aa). Disordered regions lie at residues 1930 to 1972 and 2121 to 2140; these read IAGI…PESV and AHLE…EDSL. A compositionally biased stretch (basic residues) spans 1939-1952; it reads QKQRRQRQQRHTQR. Residues 1953–1964 are compositionally biased toward polar residues; the sequence is CSKGSTGSQRPT.

The protein resides in the cell membrane. Cadherins are calcium-dependent cell adhesion proteins. They preferentially interact with themselves in a homophilic manner in connecting cells. The protein is Cadherin-89D (Cad89D) of Drosophila melanogaster (Fruit fly).